The chain runs to 37 residues: Large ribosomal subunit protein bL36 (37 aa).

This sequence belongs to the bacterial ribosomal protein bL36 family.

This chain is Large ribosomal subunit protein bL36, found in Endomicrobium trichonymphae.